The sequence spans 166 residues: MPPKLDPSQIVDVYVRVTGGEVGAASSLAPKIGPLGLAPKKIGEDIAKETAKEWKGLRVTVKLTVQNRQAKVTVVPSAAALVIKALKEPERDRKKVKNIKHNGNISFDDVTEIARIMRPRSIAKELSGTVREILGTCVSVGCTVDGKDPKDIQQEIQDGEVEIPEN.

Belongs to the universal ribosomal protein uL11 family.

Its function is as follows. Binds directly to 26S ribosomal RNA. This Arabidopsis thaliana (Mouse-ear cress) protein is Large ribosomal subunit protein uL11z (RPL12A).